A 211-amino-acid polypeptide reads, in one-letter code: Pyridoxine/pyridoxamine 5'-phosphate oxidase (211 aa).

Substrate is bound by residues 7–10 and Lys65; that span reads RREY. Residues 60-65, 75-76, Arg81, Lys82, and Gln104 contribute to the FMN site; these read RIVLLK and YT. The substrate site is built by Tyr122, Arg126, and Ser130. FMN-binding positions include 139–140 and Trp184; that span reads QS. Residue 190–192 participates in substrate binding; it reads RLH. Arg194 is an FMN binding site.

This sequence belongs to the pyridoxamine 5'-phosphate oxidase family. In terms of assembly, homodimer. The cofactor is FMN.

It catalyses the reaction pyridoxamine 5'-phosphate + O2 + H2O = pyridoxal 5'-phosphate + H2O2 + NH4(+). It carries out the reaction pyridoxine 5'-phosphate + O2 = pyridoxal 5'-phosphate + H2O2. It functions in the pathway cofactor metabolism; pyridoxal 5'-phosphate salvage; pyridoxal 5'-phosphate from pyridoxamine 5'-phosphate: step 1/1. Its pathway is cofactor metabolism; pyridoxal 5'-phosphate salvage; pyridoxal 5'-phosphate from pyridoxine 5'-phosphate: step 1/1. In terms of biological role, catalyzes the oxidation of either pyridoxine 5'-phosphate (PNP) or pyridoxamine 5'-phosphate (PMP) into pyridoxal 5'-phosphate (PLP). In Vibrio campbellii (strain ATCC BAA-1116), this protein is Pyridoxine/pyridoxamine 5'-phosphate oxidase.